We begin with the raw amino-acid sequence, 747 residues long: Myotubularin-related protein 12 (747 aa).

Positions 205 to 643 (FDTPKDWCWE…PEIKVWAQRY (439 aa)) constitute a Myotubularin phosphatase domain. The tract at residues 449–558 (VPIFLLFLDC…RGQQKGSRFK (110 aa)) is interaction with MTM1. Positions 548-575 (DRGQQKGSRFKHQRQLSLPLTQSKSSPK) are disordered. Residues 562–572 (QLSLPLTQSKS) show a composition bias toward polar residues. 2 positions are modified to phosphoserine: serine 564 and serine 601.

Belongs to the protein-tyrosine phosphatase family. Non-receptor class myotubularin subfamily. Heterodimer with lipid phosphatase MTM1. Heterodimer with lipid phosphatase MTMR2. In terms of tissue distribution, expressed in skeletal muscles (at protein level).

The protein resides in the cytoplasm. The protein localises to the sarcoplasmic reticulum. It localises to the myofibril. Its subcellular location is the sarcomere. Functionally, acts as an adapter for the myotubularin-related phosphatases. Regulates phosphatase MTM1 protein stability and possibly its intracellular location. By stabilizing MTM1 protein levels, required for skeletal muscle maintenance but not for myogenesis. This chain is Myotubularin-related protein 12 (Mtmr12), found in Mus musculus (Mouse).